The sequence spans 278 residues: Ras-related protein Rab-40B (278 aa).

Ser-23, Gly-26, and Lys-27 together coordinate GTP. The interval 41–49 (SPYGHPAGI) is switch-I. Mg(2+) is bound at residue Asp-69. Gly-72, Asn-126, and Arg-127 together coordinate GTP. A switch-II region spans residues 72–88 (GQGRFCTIFRSYSRGAQ). In terms of domain architecture, SOCS box spans 175–228 (LLRHGMDRLWRPSKVLSLQELCCRAVVSCTPGHLVDKLPLPVALRSHLKSFSMA). The tract at residues 245-278 (ANSSHKRNSFRKVRTIRPPQSPPRNCARNSCKIS) is disordered. Residues 248-259 (SHKRNSFRKVRT) show a composition bias toward basic residues. Cys-270 carries the S-palmitoyl cysteine lipid modification. Cys-275 carries the S-geranylgeranyl cysteine lipid modification.

This sequence belongs to the small GTPase superfamily. Rab family. As to quaternary structure, component of the cullin-5-RING E3 ubiquitin-protein ligase complex (ECS(RAB40B) complex) composed of CUL5, Elongin BC (ELOB and ELOC), RNF7/RBX2 and RAB40B; RAB40B interaction with ECS complex is GTP-independent. Binds (GTP-bound) LIMA1; interaction promotes LIMA1 subcellular localization in lamellipodia during cell migration. Interacts (GTP-bound) with TKS5/SH3PXD2A (via PX domain); interaction promotes invadopodia-mediated extracellular matrix degradation. Mg(2+) is required as a cofactor.

It localises to the cell membrane. Its subcellular location is the cytoplasm. The protein localises to the cytosol. It is found in the cell projection. The protein resides in the lamellipodium membrane. It localises to the ruffle. It catalyses the reaction GTP + H2O = GDP + phosphate + H(+). The protein operates within protein modification; protein ubiquitination. Regulated by guanine nucleotide exchange factors (GEFs) which promote the exchange of bound GDP for free GTP. Regulated by GTPase activating proteins (GAPs) which increase the GTP hydrolysis activity. Inhibited by GDP dissociation inhibitors (GDIs). RAB40B small GTPase acts as substrate-recognition components of the ECS(RAB40B) E3 ubiquitin ligase complex which mediates the ubiquitination of target proteins. The Rab40 subfamily belongs to the Rab family that are key regulators of intracellular membrane trafficking, from the formation of transport vesicles to their fusion with membranes. Rabs cycle between an inactive GDP-bound form and an active GTP-bound form that is able to recruit to membranes different sets of downstream effectors directly responsible for vesicle formation, movement, tethering and fusion. As part of the ECS(RAB40B) complex, GTP-bound RAB40B promotes LIMA1/EPLIN ubiquitination and degradation, thereby regulating leading-edge actin dynamics during cell migration. As part of the ECS(RAB40B) complex, GTP-bound RAB40B also ubiquitinates RAP2A GTPase which promotes its localization to lamellipodia and activation to drive cell migration. The ECS(RAB40B) complex does not mediate canonical ubiquitin-dependent degradation of RAP2. RAB40B also binds TKS5/SH3PXD2A effector independently from ECS complex to promote invadopodia-mediated extracellular matrix degradation. The sequence is that of Ras-related protein Rab-40B from Mus musculus (Mouse).